The following is a 420-amino-acid chain: Deoxyribodipyrimidine photo-lyase (420 aa).

Residues 2 to 124 (GPLLVWHRGD…PLHLLPAPHL (123 aa)) form the Photolyase/cryptochrome alpha/beta domain. The tract at residues 147–176 (APPLPPPEALPKGPEEGEIPREDPGLPLPE) is disordered. A compositionally biased stretch (basic and acidic residues) spans 159-170 (GPEEGEIPREDP). FAD is bound at residue Tyr197. A DNA-binding site is contributed by Arg201. Residues 209–213 (GSRLS), Trp241, Arg248, Asn310, and 341–343 (DGD) contribute to the FAD site. Interaction with DNA regions lie at residues 244 to 251 (ELLWRDFS) and 310 to 311 (NR). Gln373 is a binding site for DNA.

The protein belongs to the DNA photolyase class-1 family. As to quaternary structure, monomer. FAD is required as a cofactor.

The enzyme catalyses cyclobutadipyrimidine (in DNA) = 2 pyrimidine residues (in DNA).. Functionally, involved in repair of UV radiation-induced DNA damage. Catalyzes the light-dependent monomerization (300-600 nm) of cyclobutyl pyrimidine dimers (in cis-syn configuration), which are formed between adjacent bases on the same DNA strand upon exposure to ultraviolet radiation. The sequence is that of Deoxyribodipyrimidine photo-lyase (phr) from Thermus thermophilus (strain ATCC 27634 / DSM 579 / HB8).